The chain runs to 288 residues: MFKDFFNRSSKKRKYLTVQDSKQNEVPAGIMTKCPKCKKIMYTKELNENLNVCFNCDHHIALPAYKRIEAITDENSFVEFDKGMTSANPLDFPGYQEKIEKDQQKTDLSEAVVTGTAKLDGVQFGVAVMDARFRMGSMGSVVGEKICRIIDYATEHRLPFILFSASGGARMQEGIISLMQMGKTSVSLKRHSDAGLLYISYLTHPTTGGVSASFASVGDINLSEPKALIGFAGRRVIEQTINEKLPDDFQTAEFLLEHGQLDKVVHRKEMKETLAQLLKLHQEVKKDA.

Positions 30–288 (IMTKCPKCKK…KLHQEVKKDA (259 aa)) constitute a CoA carboxyltransferase N-terminal domain. Positions 34, 37, 53, and 56 each coordinate Zn(2+). The C4-type zinc finger occupies 34-56 (CPKCKKIMYTKELNENLNVCFNC).

Belongs to the AccD/PCCB family. In terms of assembly, acetyl-CoA carboxylase is a heterohexamer composed of biotin carboxyl carrier protein (AccB), biotin carboxylase (AccC) and two subunits each of ACCase subunit alpha (AccA) and ACCase subunit beta (AccD). Zn(2+) serves as cofactor.

It is found in the cytoplasm. The catalysed reaction is N(6)-carboxybiotinyl-L-lysyl-[protein] + acetyl-CoA = N(6)-biotinyl-L-lysyl-[protein] + malonyl-CoA. It functions in the pathway lipid metabolism; malonyl-CoA biosynthesis; malonyl-CoA from acetyl-CoA: step 1/1. Component of the acetyl coenzyme A carboxylase (ACC) complex. Biotin carboxylase (BC) catalyzes the carboxylation of biotin on its carrier protein (BCCP) and then the CO(2) group is transferred by the transcarboxylase to acetyl-CoA to form malonyl-CoA. The sequence is that of Acetyl-coenzyme A carboxylase carboxyl transferase subunit beta from Staphylococcus haemolyticus (strain JCSC1435).